The sequence spans 118 residues: Galanin peptides (118 aa).

The signal sequence occupies residues M1–T19. The propeptide occupies E20–E30. A61 carries the alanine amide modification.

It belongs to the galanin family. Strongly expressed in brain and stomach, moderately in the eye, and very weakly in heart, kidney and gills. Not detected in liver.

The protein localises to the secreted. In terms of biological role, endocrine hormone of the central and peripheral nervous systems that binds and activates the G protein-coupled receptors GALR1 (galr1a and galr1b) and GALR2 (galr2a and galr2b). This small neuropeptide may regulate diverse physiologic functions including contraction of smooth muscle of the gastrointestinal and genitourinary tract, growth hormone and insulin release and adrenal secretion. This chain is Galanin peptides, found in Danio rerio (Zebrafish).